The chain runs to 632 residues: tRNA uridine 5-carboxymethylaminomethyl modification enzyme MnmG (632 aa).

Residues 13-18, valine 125, and serine 180 each bind FAD; that span reads GGGHAG. 273-287 is a binding site for NAD(+); sequence GPRYCPSIEDKVMRF. Glutamine 370 provides a ligand contact to FAD.

It belongs to the MnmG family. As to quaternary structure, homodimer. Heterotetramer of two MnmE and two MnmG subunits. FAD serves as cofactor.

It is found in the cytoplasm. Functionally, NAD-binding protein involved in the addition of a carboxymethylaminomethyl (cmnm) group at the wobble position (U34) of certain tRNAs, forming tRNA-cmnm(5)s(2)U34. This chain is tRNA uridine 5-carboxymethylaminomethyl modification enzyme MnmG, found in Vibrio vulnificus (strain CMCP6).